A 221-amino-acid polypeptide reads, in one-letter code: Adenylate kinase (221 aa).

10-15 (GAGKGT) contributes to the ATP binding site. Residues 30 to 59 (STGDMLRAAVKAGTPLGVEAKKVMDAGGLV) are NMP. Residues Thr-31, Arg-36, 57 to 59 (GLV), 85 to 88 (GFPR), and Gln-92 contribute to the AMP site. Positions 122–159 (GRRVHVASGRTYHLKYNPPKTEGVDDETGEPLIQRDDD) are LID. ATP contacts are provided by residues Arg-123 and 132–133 (TY). Residues 138-159 (NPPKTEGVDDETGEPLIQRDDD) form a disordered region. AMP is bound by residues Arg-156 and Arg-167. Gly-207 lines the ATP pocket.

The protein belongs to the adenylate kinase family. As to quaternary structure, monomer.

It localises to the cytoplasm. It carries out the reaction AMP + ATP = 2 ADP. Its pathway is purine metabolism; AMP biosynthesis via salvage pathway; AMP from ADP: step 1/1. Its function is as follows. Catalyzes the reversible transfer of the terminal phosphate group between ATP and AMP. Plays an important role in cellular energy homeostasis and in adenine nucleotide metabolism. This chain is Adenylate kinase, found in Cupriavidus taiwanensis (strain DSM 17343 / BCRC 17206 / CCUG 44338 / CIP 107171 / LMG 19424 / R1) (Ralstonia taiwanensis (strain LMG 19424)).